The primary structure comprises 137 residues: Maltose regulon regulatory protein MalI (137 aa).

The HTH lacI-type domain maps to 6-60 (VTITEVAKHAGVSVTTVSMVLGNKGRISPDTIEKVNASVEALGYIRNRAAANLRS). The segment at residues 8–27 (ITEVAKHAGVSVTTVSMVLG) is a DNA-binding region (H-T-H motif).

Functionally, repressor for the malX and malY genes. The polypeptide is Maltose regulon regulatory protein MalI (malI) (Vibrio furnissii).